The primary structure comprises 291 residues: Meteorin (291 aa).

A signal peptide spans 1–21; sequence MLVAALLCALCCGLLAASARA. 5 cysteine pairs are disulfide-bonded: Cys-28-Cys-49, Cys-80-Cys-116, Cys-169-Cys-240, Cys-172-Cys-264, and Cys-182-Cys-286.

It belongs to the meteorin family. As to quaternary structure, monomer.

It localises to the secreted. Involved in both glial cell differentiation and axonal network formation during neurogenesis. Promotes astrocyte differentiation and transforms cerebellar astrocytes into radial glia. Also induces axonal extension in small and intermediate neurons of sensory ganglia by activating nearby satellite glia. In Rattus norvegicus (Rat), this protein is Meteorin (Metrn).